Here is a 310-residue protein sequence, read N- to C-terminus: MKKTLKRILFSSLSLSMLLLLTGCVSVDKAGKPYGVIWNTLGVPMANLITYFAQHQGLGFGVAIIIVTVIVRVVILPLGLYQSWKASYQAEKMAYFKPLFEPINERLRNAKTQEEKLAAQTELMTAQRENGLSMFGGIGCLPLLIQMPFFSAIFFAARYTPGVSSATFLGLNLGQKSLTLTVIIAILYFVQSWLSMQGVPDEQRQQMKTMMYLMPIMMVFMSISLPASVALYWFIGGIFSIIQQLVTTYVLKPKLRRKVEEEYTKNPPKAYKANNARKDVTNSTKATESNQAIITSKKTNRNAGKQKRRG.

Positions M1–G23 are cleaved as a signal peptide. The N-palmitoyl cysteine moiety is linked to residue C24. C24 carries the S-diacylglycerol cysteine lipid modification. A run of 5 helical transmembrane segments spans residues P33–A53, L58–L78, F135–F155, L180–P200, and V219–F239. The interval N266 to G310 is disordered. Over residues T281–K297 the composition is skewed to polar residues. The span at K298–G310 shows a compositional bias: basic residues.

It belongs to the OXA1/ALB3/YidC family. Type 2 subfamily.

The protein resides in the cell membrane. Its function is as follows. Required for the insertion and/or proper folding and/or complex formation of integral membrane proteins into the membrane. Involved in integration of membrane proteins that insert both dependently and independently of the Sec translocase complex, as well as at least some lipoproteins. In Streptococcus agalactiae serotype V (strain ATCC BAA-611 / 2603 V/R), this protein is Membrane protein insertase YidC 2.